A 115-amino-acid chain; its full sequence is Large ribosomal subunit protein uL18 (115 aa).

Residues 1 to 24 form a disordered region; sequence MISKPDKNKLRQKRHTRVRGKISG. Residues 10–20 show a composition bias toward basic residues; that stretch reads LRQKRHTRVRG.

Belongs to the universal ribosomal protein uL18 family. Part of the 50S ribosomal subunit; part of the 5S rRNA/L5/L18/L25 subcomplex. Contacts the 5S and 23S rRNAs.

This is one of the proteins that bind and probably mediate the attachment of the 5S RNA into the large ribosomal subunit, where it forms part of the central protuberance. This chain is Large ribosomal subunit protein uL18, found in Lactococcus lactis subsp. cremoris (strain MG1363).